A 297-amino-acid polypeptide reads, in one-letter code: MATNLRGVMAALLTPFDQQQALDKASLRRLVQFNIQQGIDGLYVGGSTGEAFVQSLSEREQVLEIVAEEAKGKIKLIAHVGCVSTAESQQLAASAKRYGFDAVSAVTPFYYPFSFEEHCDHYRAIIDSADGLPMVVYNIPALSGVKLTLDQINTLVTLPGVGALKQTSGDLYQMEQIRREHPDLVLYNGYDEIFASGLLAGADGGIGSTYNIMGWRYQGIVKALKEGDIQTAQKLQTECNKVIDLLIKTGVFRGLKTVLHYMDVVSVPLCRKPFGPVDEKYLPELKALAQQLMQERG.

Aceneuramate contacts are provided by Ser-47 and Thr-48. The Proton donor role is filled by Tyr-137. Residue Lys-165 is the Schiff-base intermediate with substrate of the active site. Residues Thr-167, Gly-189, Asp-191, Glu-192, and Ser-208 each coordinate aceneuramate.

This sequence belongs to the DapA family. NanA subfamily. In terms of assembly, homotetramer.

It localises to the cytoplasm. The enzyme catalyses aceneuramate = aldehydo-N-acetyl-D-mannosamine + pyruvate. The protein operates within amino-sugar metabolism; N-acetylneuraminate degradation; D-fructose 6-phosphate from N-acetylneuraminate: step 1/5. Functionally, catalyzes the reversible aldol cleavage of N-acetylneuraminic acid (sialic acid; Neu5Ac) to form pyruvate and N-acetylmannosamine (ManNAc) via a Schiff base intermediate. This is N-acetylneuraminate lyase from Escherichia coli O139:H28 (strain E24377A / ETEC).